Consider the following 794-residue polypeptide: Zinc finger and BTB domain-containing protein 17 (794 aa).

Residues 1 to 104 form the BTB domain; it reads MDFPQHSQRV…VASFLQMQDI (104 aa). Residues 116–285 are disordered; it reads EPSSTTGESA…QNLRSGTYGD (170 aa). Basic and acidic residues predominate over residues 132–142; the sequence is GGDKRAKDEKA. Positions 203–216 are enriched in low complexity; sequence SSMAAAEAEALSES. Positions 243-252 are enriched in basic and acidic residues; it reads VKEEGMHLDN. Positions 254 to 263 are enriched in acidic residues; sequence EPPEENEESA. The segment at 260–299 is interaction with MYC; sequence EESAGTDSGQELGMEGQNLRSGTYGDRTESKAYGSIIHKC. 13 C2H2-type zinc fingers span residues 297–319, 325–347, 353–375, 381–403, 409–431, 437–459, 465–487, 493–515, 519–543, 549–571, 577–599, 605–628, and 708–730; these read HKCE…IRIH, FSCR…EKTH, YGCE…KKRH, YRCG…QLVH, YQCD…LETH, HKCP…LKIH, LKCR…LRIH, YVCT…VRIH, KPCQ…VRQH, YVCE…IRHH, HKCS…IIIH, YLCD…KTVH, and YACD…VRIH. Residue K388 forms a Glycyl lysine isopeptide (Lys-Gly) (interchain with G-Cter in ubiquitin) linkage. K472 is covalently cross-linked (Glycyl lysine isopeptide (Lys-Gly) (interchain with G-Cter in ubiquitin)). Residues 628–709 are interaction with MYC; sequence HQGKAGIKIL…EDPNTHILYA (82 aa). Residues 628 to 794 are interaction with HCFC1; the sequence is HQGKAGIKIL…TAPDCLPPAE (167 aa). The tract at residues 769 to 794 is disordered; the sequence is PRDGTEGQPTLAESPPTAPDCLPPAE. Residues 784–794 are compositionally biased toward pro residues; sequence PTAPDCLPPAE.

This sequence belongs to the krueppel C2H2-type zinc-finger protein family. As to quaternary structure, homooligomerizes (via the BTB/POZ domain), multimerization is required for DNA binding. Binds to the C-terminal helix-loop-helix motif of MYC which inhibits ZBTB17 transactivation and growth arrest activities and renders it insoluble in the nucleus. Also interacts with HCFC1, MAGEA4 and TMPRSS11A. Interacts (via the C-terminal zinc fingers) with GFI1; the interaction results in the recruitment of MYC to the CDKN1A/p21 and CDKN1B promoters and repression of transcription. Interacts with TRAF2, interfering with the binding of UBC13 to TRAF2, and inhibiting TRAF2 E3 ligase activity. Interacts with BCL6; the interaction inhibits ZBTB17 transactivation activity on target genes involved in cell cycle arrest. Interacts with ZBTB49; this interaction blocks ZBTB17-mediated repression of RB1. Undergoes 'Lys-48'-linked polyubiquitination at Lys-388 and Lys-472 and subsequent proteasomal degradation in a TRAF2-dependent manner and upon TNFA stimulation. In terms of tissue distribution, found in all the embryonic and adult tissues examined.

It localises to the nucleus. In terms of biological role, transcription factor that can function as an activator or repressor depending on its binding partners, and by targeting negative regulators of cell cycle progression. Has been shown to bind to the promoters of adenovirus major late protein and cyclin D1 and activate transcription. Required for early embryonic development during gastrulation. Plays a critical role in early lymphocyte development, where it is essential to prevent apoptosis in lymphoid precursors, allowing them to survive in response to IL7 and undergo proper lineage commitment. Represses RB1 transcription; this repression can be blocked by interaction with ZBTB49. The chain is Zinc finger and BTB domain-containing protein 17 (Zbtb17) from Mus musculus (Mouse).